Reading from the N-terminus, the 716-residue chain is Exocyst complex component 8 (716 aa).

At Ser15 the chain carries Phosphoserine. The span at 110 to 119 (STGEDTAGAG) shows a compositional bias: low complexity. The disordered stretch occupies residues 110 to 149 (STGEDTAGAGPRERGAAQAGFLPGPAGVPREGPGTGEEGK). A PH domain is found at 173–273 (YLVYNGDLVE…WLEVLEETKR (101 aa)). Residues 275–284 (LSDKRRREQE) are compositionally biased toward basic and acidic residues. Residues 275-319 (LSDKRRREQEEAAALRAPPPVTSKGSNPFEDEAEEELATPEAEEE) are disordered. The span at 303–319 (FEDEAEEELATPEAEEE) shows a compositional bias: acidic residues. Thr313 carries the phosphothreonine modification.

It belongs to the EXO84 family. The exocyst complex is composed of EXOC1, EXOC2, EXOC3, EXOC4, EXOC5, EXOC6, EXOC7 and EXOC8. Interacts (via PH domain) with GTP-bound RALA and RALB. Interacts with SH3BP1; required for the localization of both SH3BP1 and the exocyst to the leading edge of migrating cells.

It is found in the cytoplasm. Its subcellular location is the perinuclear region. The protein localises to the cell projection. The protein resides in the growth cone. In terms of biological role, component of the exocyst complex involved in the docking of exocytic vesicles with fusion sites on the plasma membrane. The protein is Exocyst complex component 8 (Exoc8) of Rattus norvegicus (Rat).